The chain runs to 527 residues: Putative zinc finger CCCH domain-containing protein 64 (527 aa).

The tract at residues 103–127 (GQLRSTQTTSKRKAASRKGQREQRV) is disordered. Residues 213 to 241 (RPGEPFCRYYMKFGECKHMTFCKYNHPKD) form a C3H1-type zinc finger.

In Oryza sativa subsp. japonica (Rice), this protein is Putative zinc finger CCCH domain-containing protein 64.